Consider the following 145-residue polypeptide: MIALIQRVTHASVRVGDEVTGEIGPGLLVLLGVEKDDDEQKANRLCERVLGYRIFSDEQGKMNLNVQQAGGSVLVVSQFTLPADTEKGLRPSFSRGAPPEQAQALYDYFVSRCRAAGMTTETGRFAADMQVSLTNDGPVTFWLQI.

The Gly-cisPro motif, important for rejection of L-amino acids motif lies at 137–138 (GP).

It belongs to the DTD family. In terms of assembly, homodimer.

The protein localises to the cytoplasm. It carries out the reaction glycyl-tRNA(Ala) + H2O = tRNA(Ala) + glycine + H(+). The catalysed reaction is a D-aminoacyl-tRNA + H2O = a tRNA + a D-alpha-amino acid + H(+). Its function is as follows. An aminoacyl-tRNA editing enzyme that deacylates mischarged D-aminoacyl-tRNAs. Also deacylates mischarged glycyl-tRNA(Ala), protecting cells against glycine mischarging by AlaRS. Acts via tRNA-based rather than protein-based catalysis; rejects L-amino acids rather than detecting D-amino acids in the active site. By recycling D-aminoacyl-tRNA to D-amino acids and free tRNA molecules, this enzyme counteracts the toxicity associated with the formation of D-aminoacyl-tRNA entities in vivo and helps enforce protein L-homochirality. This is D-aminoacyl-tRNA deacylase from Cronobacter sakazakii (strain ATCC BAA-894) (Enterobacter sakazakii).